The primary structure comprises 396 residues: Flap endonuclease 1 (396 aa).

Positions 1 to 105 (MGIHGLTKLL…DQLAQRTERR (105 aa)) are N-domain. Aspartate 34 lines the Mg(2+) pocket. Arginine 71 contributes to the DNA binding site. Positions 87, 159, 161, 180, and 182 each coordinate Mg(2+). The I-domain stretch occupies residues 123 to 254 (AIEKYSKRSV…VRALQMIKKH (132 aa)). Glutamate 159 lines the DNA pocket. The DNA site is built by glycine 232 and aspartate 234. Mg(2+) is bound at residue aspartate 234. Positions 338 to 346 (NQGRLESFF) are interaction with PCNA. The segment at 341-396 (RLESFFTSLPKPATADKAKPKEDDKKRKAGAAAGGKDAKGGAAAKKGKFGVGGGKK) is disordered. The segment covering 354–366 (TADKAKPKEDDKK) has biased composition (basic and acidic residues). Residues 370-384 (GAAAGGKDAKGGAAA) are compositionally biased toward low complexity.

Belongs to the XPG/RAD2 endonuclease family. FEN1 subfamily. In terms of assembly, interacts with PCNA. Three molecules of FEN1 bind to one PCNA trimer with each molecule binding to one PCNA monomer. PCNA stimulates the nuclease activity without altering cleavage specificity. The cofactor is Mg(2+). Post-translationally, phosphorylated. Phosphorylation upon DNA damage induces relocalization to the nuclear plasma.

It is found in the nucleus. It localises to the nucleolus. The protein localises to the nucleoplasm. Its subcellular location is the mitochondrion. In terms of biological role, structure-specific nuclease with 5'-flap endonuclease and 5'-3' exonuclease activities involved in DNA replication and repair. During DNA replication, cleaves the 5'-overhanging flap structure that is generated by displacement synthesis when DNA polymerase encounters the 5'-end of a downstream Okazaki fragment. It enters the flap from the 5'-end and then tracks to cleave the flap base, leaving a nick for ligation. Also involved in the long patch base excision repair (LP-BER) pathway, by cleaving within the apurinic/apyrimidinic (AP) site-terminated flap. Acts as a genome stabilization factor that prevents flaps from equilibrating into structures that lead to duplications and deletions. Also possesses 5'-3' exonuclease activity on nicked or gapped double-stranded DNA, and exhibits RNase H activity. Also involved in replication and repair of rDNA and in repairing mitochondrial DNA. This is Flap endonuclease 1 from Chlamydomonas reinhardtii (Chlamydomonas smithii).